We begin with the raw amino-acid sequence, 188 residues long: UPF0301 protein Mmwyl1_0539 (188 aa).

Belongs to the UPF0301 (AlgH) family.

The chain is UPF0301 protein Mmwyl1_0539 from Marinomonas sp. (strain MWYL1).